A 215-amino-acid polypeptide reads, in one-letter code: Large ribosomal subunit protein uL1 (215 aa).

It belongs to the universal ribosomal protein uL1 family. As to quaternary structure, part of the 50S ribosomal subunit.

In terms of biological role, binds directly to 23S rRNA. Probably involved in E site tRNA release. Its function is as follows. Protein L1 is also a translational repressor protein, it controls the translation of its operon by binding to its mRNA. This is Large ribosomal subunit protein uL1 from Methanospirillum hungatei JF-1 (strain ATCC 27890 / DSM 864 / NBRC 100397 / JF-1).